The following is a 262-amino-acid chain: Transcription factor bHLH81 (262 aa).

Positions 1 to 29 (MQPTSVGSSGGGDDGGGRGGGGGLSRSGL) are disordered. The segment covering 8-25 (SSGGGDDGGGRGGGGGLS) has biased composition (gly residues). The bHLH domain occupies 190–240 (CATHPRSIAERVRRTRISDRIRKLQELVPNMDKQTNTADMLEEAVEYVKVL).

Homodimer. Expressed in flowers.

The protein localises to the nucleus. This is Transcription factor bHLH81 (BHLH81) from Arabidopsis thaliana (Mouse-ear cress).